The sequence spans 123 residues: Putative iron-sulfur cluster insertion protein ErpA (123 aa).

3 residues coordinate iron-sulfur cluster: Cys-51, Cys-115, and Cys-117.

This sequence belongs to the HesB/IscA family. As to quaternary structure, homodimer. Requires iron-sulfur cluster as cofactor.

Required for insertion of 4Fe-4S clusters. This chain is Putative iron-sulfur cluster insertion protein ErpA, found in Burkholderia lata (strain ATCC 17760 / DSM 23089 / LMG 22485 / NCIMB 9086 / R18194 / 383).